The chain runs to 286 residues: Shikimate dehydrogenase (NADP(+)) (286 aa).

Shikimate contacts are provided by residues 22–24 (SRS) and Thr-71. The active-site Proton acceptor is the Lys-75. Glu-87 contacts NADP(+). Residues Asn-96 and Asp-111 each coordinate shikimate. NADP(+)-binding positions include 136–140 (GAGGA), 160–165 (NRTVER), and Ile-225. Shikimate is bound at residue Tyr-227. Gly-248 lines the NADP(+) pocket.

This sequence belongs to the shikimate dehydrogenase family. As to quaternary structure, homodimer.

It catalyses the reaction shikimate + NADP(+) = 3-dehydroshikimate + NADPH + H(+). The protein operates within metabolic intermediate biosynthesis; chorismate biosynthesis; chorismate from D-erythrose 4-phosphate and phosphoenolpyruvate: step 4/7. Functionally, involved in the biosynthesis of the chorismate, which leads to the biosynthesis of aromatic amino acids. Catalyzes the reversible NADPH linked reduction of 3-dehydroshikimate (DHSA) to yield shikimate (SA). This is Shikimate dehydrogenase (NADP(+)) from Rhizobium rhizogenes (strain K84 / ATCC BAA-868) (Agrobacterium radiobacter).